A 428-amino-acid chain; its full sequence is Glutamine synthetase, chloroplastic (428 aa).

Residues 1-49 (MAQILAASPTCQMRLTKPSSIASSKLWNSVVLKQKKQSSSKVRSFKVMA) constitute a chloroplast transit peptide. Residues 75-155 (IIAEYIWIGG…VICDTYTPAG (81 aa)) enclose the GS beta-grasp domain. Positions 94 to 120 (RTLEKPVEDPSELPKWNYDGSSTGQAP) are disordered. Position 104 is a phosphoserine (serine 104). Positions 159-428 (PTNKRARAAE…LAAQKLSLKV (270 aa)) constitute a GS catalytic domain.

This sequence belongs to the glutamine synthetase family. In terms of assembly, homooctamer.

The protein localises to the plastid. It is found in the chloroplast. The enzyme catalyses L-glutamate + NH4(+) + ATP = L-glutamine + ADP + phosphate + H(+). Functionally, the light-modulated chloroplast enzyme, encoded by a nuclear gene and expressed primarily in leaves, is responsible for the reassimilation of the ammonia generated by photorespiration. The protein is Glutamine synthetase, chloroplastic (GLN2) of Brassica napus (Rape).